Consider the following 490-residue polypeptide: MSRGMSKCRITNTAPSARGWKATTFGDYAFSSRGSSEPNAMAPAIIEQIKDHPCFSREAHLYFARMHLAVASACNIQCNYCNRKYDCANESRPGVASHRLTPDQALRRAIAVANEVPQLSVVGIAGPGDACYDWRKTKATLIPIAREIPDVKLCISTNGLALPEHVDDLVDMNVGHVTITINMVDPRIGTKIYPWIFYDGRRYNGIDASRILHERQMLGLEMLTERGILAKVNSVMIPGVNDEHLIEVNKWVKDRGAFMHNVMPLISERSHGTFYGLNDQRCPATSELIALRDRLEGGTQVMRHCHQCRADAVGLLGDDRAREFTLGQFPADETYDSAKRNAYRQLIERERRGQTLEESDAATPVSAPSDELLLIAVTTKGGGRVNGHFGHAQEIQIFSVCQKGNGLIGHLKIDPYCLGGWGEEATLNTIIDALKGLDVLICSEIGKSPKNKLARRGVRATGAYDGSYIEQAIGALYRAVLHNEALATAI.

Positions 60–309 (HLYFARMHLA…QVMRHCHQCR (250 aa)) constitute a Radical SAM core domain. Cys74 and Cys78 together coordinate [4Fe-4S] cluster. Tyr80 is an S-adenosyl-L-methionine binding site. [4Fe-4S] cluster is bound at residue Cys81. Residues Gly128 and Thr180 each contribute to the S-adenosyl-L-methionine site. [4Fe-4S] cluster-binding residues include Cys305 and Cys308.

The protein belongs to the radical SAM superfamily. NifB family. It depends on [4Fe-4S] cluster as a cofactor.

The protein operates within cofactor biosynthesis; Fe-Mo cofactor biosynthesis. Functionally, involved in the biosynthesis of the iron-molybdenum cofactor (FeMo-co or M-cluster) found in the dinitrogenase enzyme of the nitrogenase complex in nitrogen-fixing microorganisms. NifB catalyzes the crucial step of radical SAM-dependent carbide insertion that occurs concomitant with the insertion of a 9th sulfur and the rearrangement/coupling of two [4Fe-4S] clusters into a [8Fe-9S-C] cluster, the precursor to the M-cluster. This is FeMo cofactor biosynthesis protein NifB (nifB) from Rhizobium leguminosarum bv. trifolii.